The following is a 303-amino-acid chain: Imidazoleglycerol-phosphate dehydratase (303 aa).

It belongs to the imidazoleglycerol-phosphate dehydratase family.

Its subcellular location is the cytoplasm. It catalyses the reaction D-erythro-1-(imidazol-4-yl)glycerol 3-phosphate = 3-(imidazol-4-yl)-2-oxopropyl phosphate + H2O. Its pathway is amino-acid biosynthesis; L-histidine biosynthesis; L-histidine from 5-phospho-alpha-D-ribose 1-diphosphate: step 6/9. The protein is Imidazoleglycerol-phosphate dehydratase of Neisseria gonorrhoeae (strain ATCC 700825 / FA 1090).